The chain runs to 471 residues: Putative multidrug resistance protein MdtD (471 aa).

13 helical membrane-spanning segments follow: residues 12-32 (LWIV…VNTA), 49-69 (MVIV…GWLA), 77-97 (IFFT…QSST), 106-126 (VLQG…VMKI), 138-158 (FVTL…GLLV), 165-185 (WIFL…LWLM), 197-217 (FSGF…LDGY), 225-245 (AGLG…LWHA), 263-285 (FSLG…FMTP), 290-312 (IGLG…GSMG), 342-362 (LLFM…VMLF), 396-416 (MVMQ…LGAF), and 431-451 (IFFW…LVFA).

The protein belongs to the major facilitator superfamily. TCR/Tet family.

Its subcellular location is the cell inner membrane. In Cronobacter sakazakii (strain ATCC BAA-894) (Enterobacter sakazakii), this protein is Putative multidrug resistance protein MdtD.